Here is a 285-residue protein sequence, read N- to C-terminus: Bifunctional protein FolD (285 aa).

Residues 165-167 (GRS) and S190 contribute to the NADP(+) site.

This sequence belongs to the tetrahydrofolate dehydrogenase/cyclohydrolase family. In terms of assembly, homodimer.

The catalysed reaction is (6R)-5,10-methylene-5,6,7,8-tetrahydrofolate + NADP(+) = (6R)-5,10-methenyltetrahydrofolate + NADPH. The enzyme catalyses (6R)-5,10-methenyltetrahydrofolate + H2O = (6R)-10-formyltetrahydrofolate + H(+). It functions in the pathway one-carbon metabolism; tetrahydrofolate interconversion. Functionally, catalyzes the oxidation of 5,10-methylenetetrahydrofolate to 5,10-methenyltetrahydrofolate and then the hydrolysis of 5,10-methenyltetrahydrofolate to 10-formyltetrahydrofolate. This Staphylococcus carnosus (strain TM300) protein is Bifunctional protein FolD.